A 49-amino-acid chain; its full sequence is Large ribosomal subunit protein bL33B (49 aa).

Belongs to the bacterial ribosomal protein bL33 family.

The chain is Large ribosomal subunit protein bL33B from Geobacillus thermodenitrificans (strain NG80-2).